We begin with the raw amino-acid sequence, 148 residues long: 3-dehydroquinate dehydratase (148 aa).

Residues N74, H80, and D87 each coordinate substrate. H100 acts as the Proton donor in catalysis. Substrate contacts are provided by residues 101–102 (LS) and R111.

Belongs to the type-II 3-dehydroquinase family. In terms of assembly, homododecamer.

It catalyses the reaction 3-dehydroquinate = 3-dehydroshikimate + H2O. It participates in metabolic intermediate biosynthesis; chorismate biosynthesis; chorismate from D-erythrose 4-phosphate and phosphoenolpyruvate: step 3/7. The sequence is that of 3-dehydroquinate dehydratase (yqhS) from Bacillus subtilis (strain 168).